We begin with the raw amino-acid sequence, 412 residues long: Serine hydroxymethyltransferase (412 aa).

Residues Leu117 and 121-123 each bind (6S)-5,6,7,8-tetrahydrofolate; that span reads GHL. At Lys226 the chain carries N6-(pyridoxal phosphate)lysine.

The protein belongs to the SHMT family. In terms of assembly, homodimer. The cofactor is pyridoxal 5'-phosphate.

It is found in the cytoplasm. It catalyses the reaction (6R)-5,10-methylene-5,6,7,8-tetrahydrofolate + glycine + H2O = (6S)-5,6,7,8-tetrahydrofolate + L-serine. The protein operates within one-carbon metabolism; tetrahydrofolate interconversion. It functions in the pathway amino-acid biosynthesis; glycine biosynthesis; glycine from L-serine: step 1/1. In terms of biological role, catalyzes the reversible interconversion of serine and glycine with tetrahydrofolate (THF) serving as the one-carbon carrier. This reaction serves as the major source of one-carbon groups required for the biosynthesis of purines, thymidylate, methionine, and other important biomolecules. Also exhibits THF-independent aldolase activity toward beta-hydroxyamino acids, producing glycine and aldehydes, via a retro-aldol mechanism. This Staphylococcus aureus (strain USA300) protein is Serine hydroxymethyltransferase.